A 622-amino-acid chain; its full sequence is Polypeptide N-acetylgalactosaminyltransferase 6 (622 aa).

Residues 1 to 8 (MRLLRRRH) are Cytoplasmic-facing. A helical; Signal-anchor for type II membrane protein membrane pass occupies residues 9-28 (MAVRLVMVGSAFVLFLFILQ). Topologically, residues 29 to 622 (RDVSGREQAT…SDPHQHWLFI (594 aa)) are lumenal. A glycan (N-linked (GlcNAc...) asparagine) is linked at asparagine 86. The tract at residues 103–135 (WERPPQDPNGPGADGKAFQKKEWTPQETQEKEE) is disordered. The segment covering 119 to 135 (AFQKKEWTPQETQEKEE) has biased composition (basic and acidic residues). Residues 176–285 (LPATSVIIVF…HGWLEPLLAR (110 aa)) are catalytic subdomain A. Mn(2+) contacts are provided by aspartate 269, histidine 271, and histidine 407. The interval 348–410 (PIKSPTFAGG…PCSVVGHVFR (63 aa)) is catalytic subdomain B. Asparagine 476 carries N-linked (GlcNAc...) asparagine glycosylation. Residues 507–622 (DHCLDVGENN…SDPHQHWLFI (116 aa)) form the Ricin B-type lectin domain. A disulfide bond links cysteine 509 and cysteine 527. Positions 511, 514, 528, and 533 each coordinate UDP-N-acetyl-alpha-D-galactosamine. Intrachain disulfides connect cysteine 553-cysteine 566 and cysteine 597-cysteine 610.

This sequence belongs to the glycosyltransferase 2 family. GalNAc-T subfamily. Mn(2+) serves as cofactor.

It localises to the golgi apparatus membrane. The catalysed reaction is L-seryl-[protein] + UDP-N-acetyl-alpha-D-galactosamine = a 3-O-[N-acetyl-alpha-D-galactosaminyl]-L-seryl-[protein] + UDP + H(+). The enzyme catalyses L-threonyl-[protein] + UDP-N-acetyl-alpha-D-galactosamine = a 3-O-[N-acetyl-alpha-D-galactosaminyl]-L-threonyl-[protein] + UDP + H(+). The protein operates within protein modification; protein glycosylation. Functionally, catalyzes the initial reaction in O-linked oligosaccharide biosynthesis, the transfer of an N-acetyl-D-galactosamine residue to a serine or threonine residue on the protein receptor. May participate in synthesis of oncofetal fibronectin. Has activity toward MUC1A, MUC2, EA2 and fibronectin peptides. This chain is Polypeptide N-acetylgalactosaminyltransferase 6 (GALNT6), found in Bos taurus (Bovine).